Consider the following 416-residue polypeptide: Serine hydroxymethyltransferase 1 (416 aa).

(6S)-5,6,7,8-tetrahydrofolate is bound by residues L121 and 125 to 127 (GHL). An N6-(pyridoxal phosphate)lysine modification is found at K229. Residues E245 and 354 to 356 (SPF) contribute to the (6S)-5,6,7,8-tetrahydrofolate site.

Belongs to the SHMT family. As to quaternary structure, homodimer. Pyridoxal 5'-phosphate is required as a cofactor.

It localises to the cytoplasm. The catalysed reaction is (6R)-5,10-methylene-5,6,7,8-tetrahydrofolate + glycine + H2O = (6S)-5,6,7,8-tetrahydrofolate + L-serine. Its pathway is one-carbon metabolism; tetrahydrofolate interconversion. The protein operates within amino-acid biosynthesis; glycine biosynthesis; glycine from L-serine: step 1/1. Catalyzes the reversible interconversion of serine and glycine with tetrahydrofolate (THF) serving as the one-carbon carrier. This reaction serves as the major source of one-carbon groups required for the biosynthesis of purines, thymidylate, methionine, and other important biomolecules. Also exhibits THF-independent aldolase activity toward beta-hydroxyamino acids, producing glycine and aldehydes, via a retro-aldol mechanism. In Vibrio vulnificus (strain CMCP6), this protein is Serine hydroxymethyltransferase 1.